The primary structure comprises 1412 residues: DNA-directed RNA polymerase subunit beta' (1412 aa).

The Zn(2+) site is built by Cys70, Cys72, Cys85, and Cys88. The Mg(2+) site is built by Asp460, Asp462, and Asp464. Zn(2+)-binding residues include Cys819, Cys893, Cys900, and Cys903. The interval 1392–1412 (EEAFEFGTPSAPAEEPQHPAE) is disordered.

Belongs to the RNA polymerase beta' chain family. As to quaternary structure, the RNAP catalytic core consists of 2 alpha, 1 beta, 1 beta' and 1 omega subunit. When a sigma factor is associated with the core the holoenzyme is formed, which can initiate transcription. Mg(2+) is required as a cofactor. The cofactor is Zn(2+).

It catalyses the reaction RNA(n) + a ribonucleoside 5'-triphosphate = RNA(n+1) + diphosphate. Its function is as follows. DNA-dependent RNA polymerase catalyzes the transcription of DNA into RNA using the four ribonucleoside triphosphates as substrates. The chain is DNA-directed RNA polymerase subunit beta' from Burkholderia mallei (strain NCTC 10247).